We begin with the raw amino-acid sequence, 406 residues long: Tyrosine--tRNA ligase (406 aa).

Residue Y35 participates in L-tyrosine binding. Residues 40-49 carry the 'HIGH' region motif; that stretch reads PTADSLHVGH. L-tyrosine is bound by residues Y168 and Q172. Positions 228-232 match the 'KMSKS' region motif; sequence KMGKT. K231 contacts ATP. In terms of domain architecture, S4 RNA-binding spans 340–404; the sequence is STVLDIIAKT…RGKKNYNKIE (65 aa).

Belongs to the class-I aminoacyl-tRNA synthetase family. TyrS type 1 subfamily. Homodimer.

The protein resides in the cytoplasm. It carries out the reaction tRNA(Tyr) + L-tyrosine + ATP = L-tyrosyl-tRNA(Tyr) + AMP + diphosphate + H(+). Functionally, catalyzes the attachment of tyrosine to tRNA(Tyr) in a two-step reaction: tyrosine is first activated by ATP to form Tyr-AMP and then transferred to the acceptor end of tRNA(Tyr). In Clostridium botulinum (strain Alaska E43 / Type E3), this protein is Tyrosine--tRNA ligase.